Here is an 815-residue protein sequence, read N- to C-terminus: Leucine--tRNA ligase (815 aa).

Positions 42-52 (PYPSGRLHMGH) match the 'HIGH' region motif. The short motif at 574–578 (KMSKS) is the 'KMSKS' region element. ATP is bound at residue Lys577.

Belongs to the class-I aminoacyl-tRNA synthetase family.

It is found in the cytoplasm. The enzyme catalyses tRNA(Leu) + L-leucine + ATP = L-leucyl-tRNA(Leu) + AMP + diphosphate. This chain is Leucine--tRNA ligase, found in Alcanivorax borkumensis (strain ATCC 700651 / DSM 11573 / NCIMB 13689 / SK2).